Here is a 31-residue protein sequence, read N- to C-terminus: GTVPCGESCVFIPCITGIAGCSCKNKVCYLN.

The segment at residues G1 to N31 is a cross-link (cyclopeptide (Gly-Asn)). Cystine bridges form between C5/C21, C9/C23, and C14/C28.

Contains 3 disulfide bonds. In terms of processing, this is a cyclic peptide. Expressed in root nodules but not in seed.

Functionally, probably participates in a plant defense mechanism. The chain is Cliotide T17 from Clitoria ternatea (Butterfly pea).